A 237-amino-acid polypeptide reads, in one-letter code: Sugar fermentation stimulation protein homolog (237 aa).

This sequence belongs to the SfsA family.

In Pseudomonas savastanoi pv. phaseolicola (strain 1448A / Race 6) (Pseudomonas syringae pv. phaseolicola (strain 1448A / Race 6)), this protein is Sugar fermentation stimulation protein homolog.